Consider the following 185-residue polypeptide: Ribosome maturation factor RimM (185 aa).

Residues 106 to 185 (TGDYYWKDLI…TIEVDWDPGF (80 aa)) enclose the PRC barrel domain.

Belongs to the RimM family. In terms of assembly, binds ribosomal protein uS19.

Its subcellular location is the cytoplasm. Its function is as follows. An accessory protein needed during the final step in the assembly of 30S ribosomal subunit, possibly for assembly of the head region. Essential for efficient processing of 16S rRNA. May be needed both before and after RbfA during the maturation of 16S rRNA. It has affinity for free ribosomal 30S subunits but not for 70S ribosomes. The sequence is that of Ribosome maturation factor RimM from Photorhabdus laumondii subsp. laumondii (strain DSM 15139 / CIP 105565 / TT01) (Photorhabdus luminescens subsp. laumondii).